Consider the following 141-residue polypeptide: ATP synthase epsilon chain (141 aa).

This sequence belongs to the ATPase epsilon chain family. As to quaternary structure, F-type ATPases have 2 components, CF(1) - the catalytic core - and CF(0) - the membrane proton channel. CF(1) has five subunits: alpha(3), beta(3), gamma(1), delta(1), epsilon(1). CF(0) has three main subunits: a, b and c.

The protein localises to the cell inner membrane. Functionally, produces ATP from ADP in the presence of a proton gradient across the membrane. The chain is ATP synthase epsilon chain from Burkholderia thailandensis (strain ATCC 700388 / DSM 13276 / CCUG 48851 / CIP 106301 / E264).